The sequence spans 357 residues: Fructose-1,6-bisphosphatase class 1 2 (357 aa).

Residues glutamate 90, aspartate 112, leucine 114, and aspartate 115 each coordinate Mg(2+). Substrate-binding positions include 115–118 (DGSS) and asparagine 206. Glutamate 278 provides a ligand contact to Mg(2+).

The protein belongs to the FBPase class 1 family. As to quaternary structure, homotetramer. The cofactor is Mg(2+).

Its subcellular location is the cytoplasm. It catalyses the reaction beta-D-fructose 1,6-bisphosphate + H2O = beta-D-fructose 6-phosphate + phosphate. It participates in carbohydrate biosynthesis; gluconeogenesis. The sequence is that of Fructose-1,6-bisphosphatase class 1 2 from Dechloromonas aromatica (strain RCB).